The sequence spans 154 residues: 17 kDa surface antigen (154 aa).

The N-terminal stretch at 1 to 19 (MKLLSKIMIIALAASMLQA) is a signal peptide. Cys20 carries N-palmitoyl cysteine lipidation. The S-diacylglycerol cysteine moiety is linked to residue Cys20.

Belongs to the rickettsiale 17 kDa surface antigen family.

The protein localises to the cell outer membrane. In Rickettsia rhipicephali, this protein is 17 kDa surface antigen (omp).